The chain runs to 396 residues: Digeranylgeranylglycerophospholipid reductase (396 aa).

Glycine 14, glutamate 33, cysteine 44, glycine 45, glycine 47, arginine 100, alanine 124, glutamate 162, aspartate 283, glycine 295, and isoleucine 296 together coordinate FAD. Residues lysine 338 and valine 374 each coordinate a 2,3-bis-O-(geranylgeranyl)-sn-glycerol 1-phospholipid.

It belongs to the geranylgeranyl reductase family. DGGGPL reductase subfamily. As to quaternary structure, monomer. It depends on FAD as a cofactor.

The protein localises to the cell membrane. It catalyses the reaction 2,3-bis-O-(phytanyl)-sn-glycerol 1-phosphate + 8 NADP(+) = 2,3-bis-O-(geranylgeranyl)-sn-glycerol 1-phosphate + 8 NADPH + 8 H(+). The enzyme catalyses 2,3-bis-O-(phytanyl)-sn-glycerol 1-phosphate + 8 NAD(+) = 2,3-bis-O-(geranylgeranyl)-sn-glycerol 1-phosphate + 8 NADH + 8 H(+). It carries out the reaction a 2,3-bis-O-phytanyl-sn-glycerol 1-phospholipid + 8 A = a 2,3-bis-O-(geranylgeranyl)-sn-glycerol 1-phospholipid + 8 AH2. The catalysed reaction is CDP-2,3-bis-O-(geranylgeranyl)-sn-glycerol + 8 AH2 = CDP-2,3-bis-O-(phytanyl)-sn-glycerol + 8 A. It catalyses the reaction archaetidylserine + 8 AH2 = 2,3-bis-O-phytanyl-sn-glycero-3-phospho-L-serine + 8 A. The protein operates within membrane lipid metabolism; glycerophospholipid metabolism. Is involved in the reduction of 2,3-digeranylgeranylglycerophospholipids (unsaturated archaeols) into 2,3-diphytanylglycerophospholipids (saturated archaeols) in the biosynthesis of archaeal membrane lipids. Catalyzes the formation of archaetidic acid (2,3-di-O-phytanyl-sn-glyceryl phosphate) from 2,3-di-O-geranylgeranylglyceryl phosphate (DGGGP) via the hydrogenation of each double bond of the isoprenoid chains. Can use both NADH and NADPH as electron donors. Also catalyzes the reduction of 2,3-di-O-geranylgeranylglyceryl phosphate analogs such as 2,3-di-O-phytyl-sn-glyceryl phosphate (DPHGP), 3-O-(2,3-di-O-phytyl-sn-glycero-phospho)-sn-glycerol (DPHGPG) and 2,3-di-O-phytyl-sn-glycero-phosphoethanolamine (DPHGPE). Is not active toward 2,3-di-O-geranylgeranylglycerol. Is also probably able to reduce double bonds of geranyl groups in CDP-2,3-bis-O-(geranylgeranyl)-sn-glycerol and archaetidylserine, thus acting at various stages in the biosynthesis of archaeal membrane lipids. This is Digeranylgeranylglycerophospholipid reductase from Thermoplasma acidophilum (strain ATCC 25905 / DSM 1728 / JCM 9062 / NBRC 15155 / AMRC-C165).